The chain runs to 559 residues: Cocaine esterase (559 aa).

Residues Met1–Gly26 form the signal peptide. Gln27 carries the pyrrolidone carboxylic acid modification. Residues Cys95 and Cys123 are joined by a disulfide bond. Asn111 carries N-linked (GlcNAc...) asparagine glycosylation. The Acyl-ester intermediate role is filled by Ser228. An N-linked (GlcNAc...) asparagine glycan is attached at Asn276. An intrachain disulfide couples Cys280 to Cys291. Residues Glu345 and His457 each act as charge relay system in the active site. Positions His556–Leu559 match the Prevents secretion from ER motif.

This sequence belongs to the type-B carboxylesterase/lipase family. As to quaternary structure, monomer. Glycosylated. Preferentially expressed in intestine with moderate expression in liver. Within the intestine, highest expression is found in small intestine with lower expression in colon and rectum.

The protein localises to the endoplasmic reticulum lumen. The enzyme catalyses cocaine + H2O = ecgonine methyl ester + benzoate + H(+). It catalyses the reaction a carboxylic ester + H2O = an alcohol + a carboxylate + H(+). The catalysed reaction is 4-methylumbelliferyl acetate + H2O = 4-methylumbelliferone + acetate + H(+). It carries out the reaction 2-(5Z,8Z,11Z,14Z-eicosatetraenoyl)-glycerol + H2O = glycerol + (5Z,8Z,11Z,14Z)-eicosatetraenoate + H(+). The enzyme catalyses prostaglandin E2 1-glyceryl ester + H2O = prostaglandin E2 + glycerol + H(+). It catalyses the reaction prostaglandin F2alpha 1-glyceryl ester + H2O = prostaglandin F2alpha + glycerol + H(+). Involved in the detoxification of xenobiotics and in the activation of ester and amide prodrugs. Shows high catalytic efficiency for hydrolysis of cocaine, 4-methylumbelliferyl acetate, heroin and 6-monoacetylmorphine. Hydrolyzes aspirin, substrates with large alcohol group and small acyl group and endogenous lipids such as triacylglycerol. Converts monoacylglycerides to free fatty acids and glycerol. Hydrolyzes of 2-arachidonoylglycerol and prostaglandins. In Homo sapiens (Human), this protein is Cocaine esterase.